A 666-amino-acid polypeptide reads, in one-letter code: tRNA 5-methylaminomethyl-2-thiouridine biosynthesis bifunctional protein MnmC (666 aa).

Positions 1–245 (MKQYAIQPAT…KREMLCGVME (245 aa)) are tRNA (mnm(5)s(2)U34)-methyltransferase. Residues 270-666 (IGGGIASALL…RKLLKGKAVK (397 aa)) are FAD-dependent cmnm(5)s(2)U34 oxidoreductase.

This sequence in the N-terminal section; belongs to the methyltransferase superfamily. tRNA (mnm(5)s(2)U34)-methyltransferase family. The protein in the C-terminal section; belongs to the DAO family. The cofactor is FAD.

It is found in the cytoplasm. It carries out the reaction 5-aminomethyl-2-thiouridine(34) in tRNA + S-adenosyl-L-methionine = 5-methylaminomethyl-2-thiouridine(34) in tRNA + S-adenosyl-L-homocysteine + H(+). Functionally, catalyzes the last two steps in the biosynthesis of 5-methylaminomethyl-2-thiouridine (mnm(5)s(2)U) at the wobble position (U34) in tRNA. Catalyzes the FAD-dependent demodification of cmnm(5)s(2)U34 to nm(5)s(2)U34, followed by the transfer of a methyl group from S-adenosyl-L-methionine to nm(5)s(2)U34, to form mnm(5)s(2)U34. The protein is tRNA 5-methylaminomethyl-2-thiouridine biosynthesis bifunctional protein MnmC of Salmonella typhi.